The sequence spans 878 residues: Alanine--tRNA ligase (878 aa).

Positions 566, 570, 668, and 672 each coordinate Zn(2+).

This sequence belongs to the class-II aminoacyl-tRNA synthetase family. It depends on Zn(2+) as a cofactor.

The protein resides in the cytoplasm. It carries out the reaction tRNA(Ala) + L-alanine + ATP = L-alanyl-tRNA(Ala) + AMP + diphosphate. In terms of biological role, catalyzes the attachment of alanine to tRNA(Ala) in a two-step reaction: alanine is first activated by ATP to form Ala-AMP and then transferred to the acceptor end of tRNA(Ala). Also edits incorrectly charged Ser-tRNA(Ala) and Gly-tRNA(Ala) via its editing domain. The protein is Alanine--tRNA ligase of Bacillus subtilis (strain 168).